We begin with the raw amino-acid sequence, 308 residues long: Transaldolase (308 aa).

Catalysis depends on Lys125, which acts as the Schiff-base intermediate with substrate.

Belongs to the transaldolase family. Type 1 subfamily. As to quaternary structure, homodimer.

The protein localises to the cytoplasm. It catalyses the reaction D-sedoheptulose 7-phosphate + D-glyceraldehyde 3-phosphate = D-erythrose 4-phosphate + beta-D-fructose 6-phosphate. Its pathway is carbohydrate degradation; pentose phosphate pathway; D-glyceraldehyde 3-phosphate and beta-D-fructose 6-phosphate from D-ribose 5-phosphate and D-xylulose 5-phosphate (non-oxidative stage): step 2/3. In terms of biological role, transaldolase is important for the balance of metabolites in the pentose-phosphate pathway. This Pseudomonas putida (strain GB-1) protein is Transaldolase.